A 154-amino-acid polypeptide reads, in one-letter code: Transcription antitermination protein NusB (154 aa).

This sequence belongs to the NusB family.

Involved in transcription antitermination. Required for transcription of ribosomal RNA (rRNA) genes. Binds specifically to the boxA antiterminator sequence of the ribosomal RNA (rrn) operons. This chain is Transcription antitermination protein NusB, found in Methylobacillus flagellatus (strain ATCC 51484 / DSM 6875 / VKM B-1610 / KT).